We begin with the raw amino-acid sequence, 238 residues long: MIIIPARLASTRFPRKVLHPINGIPMIIHTAQRASQVDEVVIATDSEEVMKIAKQYGFDAVLTSKTHESGTDRVNEAATLLGLDAKEIIINVQADEPLIEPQVIKKVKELTIKHTKSCEIMLCSAYKKISFDATNDPNSVKVVLDASDKALYFSRSQIPYPRSDVKTINIHLGIYGYTKEMLQKFCTLPTAPLEQIEKLEQLRALYHGYRIAMVEVTSQSIGIDTPEDLKKINASFFE.

This sequence belongs to the KdsB family.

The protein localises to the cytoplasm. It catalyses the reaction 3-deoxy-alpha-D-manno-oct-2-ulosonate + CTP = CMP-3-deoxy-beta-D-manno-octulosonate + diphosphate. It functions in the pathway nucleotide-sugar biosynthesis; CMP-3-deoxy-D-manno-octulosonate biosynthesis; CMP-3-deoxy-D-manno-octulosonate from 3-deoxy-D-manno-octulosonate and CTP: step 1/1. It participates in bacterial outer membrane biogenesis; lipopolysaccharide biosynthesis. Activates KDO (a required 8-carbon sugar) for incorporation into bacterial lipopolysaccharide in Gram-negative bacteria. The chain is 3-deoxy-manno-octulosonate cytidylyltransferase from Nitratiruptor sp. (strain SB155-2).